We begin with the raw amino-acid sequence, 115 residues long: NADH-ubiquinone oxidoreductase chain 3 (115 aa).

3 helical membrane passes run 5–25, 55–75, and 86–106; these read LTFM…FWLP, FFLV…LLPL, and LMLT…AYEW.

It belongs to the complex I subunit 3 family. In terms of assembly, core subunit of respiratory chain NADH dehydrogenase (Complex I) which is composed of 45 different subunits. Interacts with TMEM186. Interacts with TMEM242.

It localises to the mitochondrion inner membrane. The catalysed reaction is a ubiquinone + NADH + 5 H(+)(in) = a ubiquinol + NAD(+) + 4 H(+)(out). Its function is as follows. Core subunit of the mitochondrial membrane respiratory chain NADH dehydrogenase (Complex I) which catalyzes electron transfer from NADH through the respiratory chain, using ubiquinone as an electron acceptor. Essential for the catalytic activity of complex I. The chain is NADH-ubiquinone oxidoreductase chain 3 from Avahi unicolor (Sambirano woolly lemur).